The sequence spans 90 residues: Serine protease inhibitor kazal-like protein, minor form (90 aa).

Positions 1–23 are cleaved as a signal peptide; sequence MSSTWIKFLFILTLVLLPYSVFS. A Kazal-like domain is found at 33–89; sequence VIKEPNCTMYKSKSECSNIAENPVCADDRNTYYNECYFCIEKVVEKLKYRYHGICIY. A glycan (N-linked (GlcNAc...) asparagine) is linked at N38.

As to expression, luminal fluid and mucosal folds of the seminal vesicles (at protein level). Not detected in brain, heart, lung, liver, kidney, stomach, small intestine, muscle, skin, thymus, placenta or bladder.

It localises to the secreted. Its function is as follows. Does not function as an inhibitor of trypsin, chymotrypsin, subtilisin or elastase. Binds sperm and enhances sperm motility. May act as a decapacitation factor, suppresses BSA-stimulated sperm capacitation and blocks sperm-oocyte interactions in vitro. In Mus musculus (Mouse), this protein is Serine protease inhibitor kazal-like protein, minor form (Spinkl).